Reading from the N-terminus, the 683-residue chain is Elongation factor G 1 (683 aa).

In terms of domain architecture, tr-type G spans 3–278 (DKMRNIGIMA…AVVDFLPAPN (276 aa)). Residues 12–19 (AHIDAGKT), 76–80 (DTPGH), and 130–133 (NKMD) contribute to the GTP site.

Belongs to the TRAFAC class translation factor GTPase superfamily. Classic translation factor GTPase family. EF-G/EF-2 subfamily.

It localises to the cytoplasm. In terms of biological role, catalyzes the GTP-dependent ribosomal translocation step during translation elongation. During this step, the ribosome changes from the pre-translocational (PRE) to the post-translocational (POST) state as the newly formed A-site-bound peptidyl-tRNA and P-site-bound deacylated tRNA move to the P and E sites, respectively. Catalyzes the coordinated movement of the two tRNA molecules, the mRNA and conformational changes in the ribosome. In Treponema denticola (strain ATCC 35405 / DSM 14222 / CIP 103919 / JCM 8153 / KCTC 15104), this protein is Elongation factor G 1.